Consider the following 151-residue polypeptide: Neuroglobin (151 aa).

The Globin domain maps to 1-149; it reads MERPEPELIR…VVQAMSRGWD (149 aa). Residues Cys46 and Cys55 are joined by a disulfide bond. Residues His64 and His96 each coordinate heme b.

Belongs to the globin family. In terms of assembly, monomer. Homodimer and homotetramer; disulfide-linked. Mainly monomeric but also detected as part of homodimers and homotetramers. Interacts with 14-3-3 proteins; regulates the phosphorylation of NGB. Could interact (ferrous form) with G-alpha(i) proteins (GTP-bound form). Post-translationally, phosphorylated during hypoxia by ERK1/ERK2. Phosphorylation regulates the heme pocket hexacoordination preventing the association of His-64 with the heme metal center. Thereby, promotes the access of dioxygen and nitrite to the heme and stimulates the nitrite reductase activity. Phosphorylation during hypoxia is stabilized by 14-3-3 proteins. In terms of processing, an intramolecular Cys-46/Cys-55 disulfide bond, not necessarily present in orthologs, regulates the heme pocket hexacoordination preventing the association of His-64 with the heme metal center. Thereby, promotes the access of dioxygen and nitrite to the heme and stimulates the nitrite reductase activity. Predominantly expressed in brain, the strongest expression is seen in the frontal lobe, the subthalamic nucleus and the thalamus.

The protein localises to the cytoplasm. Its subcellular location is the cytosol. It localises to the mitochondrion matrix. It carries out the reaction Fe(III)-heme b-[protein] + nitric oxide + H2O = Fe(II)-heme b-[protein] + nitrite + 2 H(+). Its function is as follows. Monomeric globin with a bis-histidyl six-coordinate heme-iron atom through which it can bind dioxygen, carbon monoxide and nitric oxide. Could help transport oxygen and increase its availability to the metabolically active neuronal tissues, though its low quantity in tissues as well as its high affinity for dioxygen, which may limit its oxygen-releasing ability, argue against it. The ferrous/deoxygenated form exhibits a nitrite reductase activity and it could produce nitric oxide which in turn inhibits cellular respiration in response to hypoxia. In its ferrous/deoxygenated state, it may also exhibit GDI (Guanine nucleotide Dissociation Inhibitor) activity toward heterotrimeric G-alpha proteins, thereby regulating signal transduction to facilitate neuroprotective responses in the wake of hypoxia and associated oxidative stress. This Homo sapiens (Human) protein is Neuroglobin.